The following is a 281-amino-acid chain: Ermin (281 aa).

Composition is skewed to polar residues over residues methionine 1–glutamate 12, asparagine 21–glutamine 31, and alanine 135–threonine 147. Disordered regions lie at residues methionine 1–asparagine 80, arginine 110–threonine 147, and lysine 167–alanine 248. Residues aspartate 169–glutamate 197 show a composition bias toward acidic residues. Basic and acidic residues predominate over residues valine 198–serine 223. Phosphoserine is present on residues serine 211, serine 223, serine 227, and serine 230. At threonine 234 the chain carries Phosphothreonine. The segment at lysine 262–leucine 281 is binds actin.

In terms of assembly, binds actin. As to expression, brain and spinal cord. Exclusively expressed by the oligodendrocytes. Appears at a late stage during myelination, and in the mature nerves, it is localized to the outer cytoplasmic lip of the myelin sheath and the paranodal loops.

The protein localises to the cytoplasm. It localises to the cytoskeleton. Plays a role in cytoskeletal rearrangements during the late wrapping and/or compaction phases of myelinogenesis as well as in maintenance and stability of myelin sheath in the adult. May play an important role in late-stage oligodendroglia maturation, myelin/Ranvier node formation during CNS development, and in the maintenance and plasticity of related structures in the mature CNS. In Mus musculus (Mouse), this protein is Ermin (Ermn).